The chain runs to 315 residues: Methionyl-tRNA formyltransferase (315 aa).

113–116 lines the (6S)-5,6,7,8-tetrahydrofolate pocket; it reads SLLP.

The protein belongs to the Fmt family.

The enzyme catalyses L-methionyl-tRNA(fMet) + (6R)-10-formyltetrahydrofolate = N-formyl-L-methionyl-tRNA(fMet) + (6S)-5,6,7,8-tetrahydrofolate + H(+). Its function is as follows. Attaches a formyl group to the free amino group of methionyl-tRNA(fMet). The formyl group appears to play a dual role in the initiator identity of N-formylmethionyl-tRNA by promoting its recognition by IF2 and preventing the misappropriation of this tRNA by the elongation apparatus. The chain is Methionyl-tRNA formyltransferase from Cronobacter sakazakii (strain ATCC BAA-894) (Enterobacter sakazakii).